The following is a 350-amino-acid chain: GTPase Obg (350 aa).

Positions 1 to 158 (MFIDSVKITL…RLVRLELKLI (158 aa)) constitute an Obg domain. The OBG-type G domain maps to 159–339 (ADVGLVGFPN…LKFMLLEEIK (181 aa)). GTP-binding positions include 165-172 (GFPNVGKS), 190-194 (FTTLT), 212-215 (DIPG), 280-283 (SKSD), and 320-322 (SSL). S172 and T192 together coordinate Mg(2+).

The protein belongs to the TRAFAC class OBG-HflX-like GTPase superfamily. OBG GTPase family. As to quaternary structure, monomer. The cofactor is Mg(2+).

It localises to the cytoplasm. In terms of biological role, an essential GTPase which binds GTP, GDP and possibly (p)ppGpp with moderate affinity, with high nucleotide exchange rates and a fairly low GTP hydrolysis rate. Plays a role in control of the cell cycle, stress response, ribosome biogenesis and in those bacteria that undergo differentiation, in morphogenesis control. The sequence is that of GTPase Obg from Campylobacter jejuni subsp. jejuni serotype O:2 (strain ATCC 700819 / NCTC 11168).